Reading from the N-terminus, the 147-residue chain is Hemoglobin subunit gamma (147 aa).

In terms of domain architecture, Globin spans 3 to 147 (NFTAEDKAAI…VASALASRYH (145 aa)). Heme b contacts are provided by histidine 64 and histidine 93.

It belongs to the globin family. Heterotetramer of two alpha chains and two gamma chains in fetal hemoglobin (Hb F). In terms of tissue distribution, red blood cells.

Its function is as follows. Gamma chains make up the fetal hemoglobin F, in combination with alpha chains. The chain is Hemoglobin subunit gamma (HBG) from Lagothrix lagotricha (Brown woolly monkey).